A 166-amino-acid chain; its full sequence is Endoribonuclease YbeY (166 aa).

3 residues coordinate Zn(2+): His-136, His-140, and His-146.

It belongs to the endoribonuclease YbeY family. Requires Zn(2+) as cofactor.

The protein localises to the cytoplasm. Single strand-specific metallo-endoribonuclease involved in late-stage 70S ribosome quality control and in maturation of the 3' terminus of the 16S rRNA. The sequence is that of Endoribonuclease YbeY from Synechococcus sp. (strain CC9605).